The primary structure comprises 145 residues: Probable D-aminoacyl-tRNA deacylase (145 aa).

This sequence belongs to the DTD family. Homodimer.

It is found in the cytoplasm. It carries out the reaction glycyl-tRNA(Ala) + H2O = tRNA(Ala) + glycine + H(+). The enzyme catalyses a D-aminoacyl-tRNA + H2O = a tRNA + a D-alpha-amino acid + H(+). An aminoacyl-tRNA editing enzyme that deacylates mischarged D-aminoacyl-tRNAs. Also deacylates mischarged glycyl-tRNA(Ala), protecting cells against glycine mischarging by AlaRS. Acts via tRNA-based rather than protein-based catalysis; rejects L-amino acids rather than detecting D-amino acids in the active site. By recycling D-aminoacyl-tRNA to D-amino acids and free tRNA molecules, this enzyme counteracts the toxicity associated with the formation of D-aminoacyl-tRNA entities in vivo and helps enforce protein L-homochirality. In Shigella flexneri serotype 5b (strain 8401), this protein is Probable D-aminoacyl-tRNA deacylase.